The following is a 36-amino-acid chain: Photosystem II reaction center protein Y (36 aa).

The Lumenal portion of the chain corresponds to 1–4 (MDSR). The helical transmembrane segment at 5-23 (LLIVLIPVLAAASWAVYNI) threads the bilayer. Residues 24–36 (GRVALQQFRKMTS) are Stromal-facing.

Belongs to the PsbY family. In terms of assembly, PSII is composed of 1 copy each of membrane proteins PsbA, PsbB, PsbC, PsbD, PsbE, PsbF, PsbH, PsbI, PsbJ, PsbK, PsbL, PsbM, PsbT, PsbX, PsbY, PsbZ, Psb30/Ycf12, at least 3 peripheral proteins of the oxygen-evolving complex and a large number of cofactors. It forms dimeric complexes.

Its subcellular location is the plastid. The protein localises to the chloroplast thylakoid membrane. Loosely associated component of the core of photosystem II (PSII), it is not always seen in crystals. PSII is a light-driven water plastoquinone oxidoreductase, using light energy to abstract electrons from H(2)O, generating a proton gradient subsequently used for ATP formation. In Porphyra purpurea (Red seaweed), this protein is Photosystem II reaction center protein Y.